The primary structure comprises 222 residues: UPF0758 protein TM_1557 (222 aa).

Residues 101–222 enclose the MPN domain; it reads KLDSSVKVYK…YFSFREEGEL (122 aa). Zn(2+) is bound by residues H171, H173, and D184. Positions 171 to 184 match the JAMM motif motif; sequence HNHPSGDPTPSKED.

It belongs to the UPF0758 family.

The chain is UPF0758 protein TM_1557 from Thermotoga maritima (strain ATCC 43589 / DSM 3109 / JCM 10099 / NBRC 100826 / MSB8).